Consider the following 269-residue polypeptide: Thiazole synthase (269 aa).

Lysine 112 serves as the catalytic Schiff-base intermediate with DXP. Residues glycine 173, 199-200 (AG), and 221-222 (NT) each bind 1-deoxy-D-xylulose 5-phosphate.

It belongs to the ThiG family. In terms of assembly, homotetramer. Forms heterodimers with either ThiH or ThiS.

It localises to the cytoplasm. It carries out the reaction [ThiS sulfur-carrier protein]-C-terminal-Gly-aminoethanethioate + 2-iminoacetate + 1-deoxy-D-xylulose 5-phosphate = [ThiS sulfur-carrier protein]-C-terminal Gly-Gly + 2-[(2R,5Z)-2-carboxy-4-methylthiazol-5(2H)-ylidene]ethyl phosphate + 2 H2O + H(+). It participates in cofactor biosynthesis; thiamine diphosphate biosynthesis. Its function is as follows. Catalyzes the rearrangement of 1-deoxy-D-xylulose 5-phosphate (DXP) to produce the thiazole phosphate moiety of thiamine. Sulfur is provided by the thiocarboxylate moiety of the carrier protein ThiS. In vitro, sulfur can be provided by H(2)S. The protein is Thiazole synthase of Caulobacter vibrioides (strain ATCC 19089 / CIP 103742 / CB 15) (Caulobacter crescentus).